The sequence spans 259 residues: Cytochrome c oxidase subunit 3 (259 aa).

7 helical membrane passes run 13–33, 36–56, 80–100, 125–145, 160–180, 195–215, and 237–257; these read PWPL…ASWF, HGFL…IQWW, GMIL…WAFF, FSVP…VTWA, ALIL…GEYM, FFVA…FLAI, and AWYW…IYWW.

The protein belongs to the cytochrome c oxidase subunit 3 family. As to quaternary structure, component of the cytochrome c oxidase (complex IV, CIV), a multisubunit enzyme composed of a catalytic core of 3 subunits and several supernumerary subunits. The complex exists as a monomer or a dimer and forms supercomplexes (SCs) in the inner mitochondrial membrane with ubiquinol-cytochrome c oxidoreductase (cytochrome b-c1 complex, complex III, CIII).

The protein localises to the mitochondrion inner membrane. It catalyses the reaction 4 Fe(II)-[cytochrome c] + O2 + 8 H(+)(in) = 4 Fe(III)-[cytochrome c] + 2 H2O + 4 H(+)(out). Its function is as follows. Component of the cytochrome c oxidase, the last enzyme in the mitochondrial electron transport chain which drives oxidative phosphorylation. The respiratory chain contains 3 multisubunit complexes succinate dehydrogenase (complex II, CII), ubiquinol-cytochrome c oxidoreductase (cytochrome b-c1 complex, complex III, CIII) and cytochrome c oxidase (complex IV, CIV), that cooperate to transfer electrons derived from NADH and succinate to molecular oxygen, creating an electrochemical gradient over the inner membrane that drives transmembrane transport and the ATP synthase. Cytochrome c oxidase is the component of the respiratory chain that catalyzes the reduction of oxygen to water. Electrons originating from reduced cytochrome c in the intermembrane space (IMS) are transferred via the dinuclear copper A center (CU(A)) of subunit 2 and heme A of subunit 1 to the active site in subunit 1, a binuclear center (BNC) formed by heme A3 and copper B (CU(B)). The BNC reduces molecular oxygen to 2 water molecules using 4 electrons from cytochrome c in the IMS and 4 protons from the mitochondrial matrix. This chain is Cytochrome c oxidase subunit 3 (COIII), found in Lumbricus terrestris (Common earthworm).